The primary structure comprises 392 residues: MKCGNGIEARQVNELFINVDPIQAGGRLTGDAIKAIIAYGDGYSVCDNCRKPNRLDCIAKPPIAEFHKDVAAWLNMDAARMMPGARRGFQAVAHTYVSKGNPVLLTSLSHYTEFLAVEGAGGVACEIPADSNHLVTPDAAAAKIEEVKQKFGKAPVLAIIDHVDYQYGNLHDFAGIAKVAHQYDVPVLYNGAYTVGTMPVDGKVIGADFIVGSGHKSMASPAPSGVLATTAERAKEVFRTTGITGDVTGRKFGIKEPELMGCTLMGATLVGMMASFPHVKERVKHFDKELVNNRIVMEALLSIEGTKILSEYPRKHTLTRVDTTGSFDRVAETHKKKGFYFSSALNDKGIFGLIPGATRIWKFNTYGMTEKQTRYLADAFVAVAQENGLPVK.

Residues 85-86 (AR), N190, and 213-215 (SGH) each bind pyridoxal 5'-phosphate. An N6-(pyridoxal phosphate)lysine modification is found at K216.

It belongs to the SepCysS family. In terms of assembly, homodimer. Interacts with SepRS. Pyridoxal 5'-phosphate serves as cofactor.

The enzyme catalyses O-phospho-L-seryl-tRNA(Cys) + hydrogen sulfide + H(+) = L-cysteinyl-tRNA(Cys) + phosphate. In terms of biological role, converts O-phospho-L-seryl-tRNA(Cys) (Sep-tRNA(Cys)) to L-cysteinyl-tRNA(Cys) (Cys-tRNA(Cys)). The sequence is that of O-phospho-L-seryl-tRNA:Cys-tRNA synthase 1 from Methanoregula boonei (strain DSM 21154 / JCM 14090 / 6A8).